A 470-amino-acid polypeptide reads, in one-letter code: Siroheme synthase (470 aa).

The segment at 1–203 is precorrin-2 dehydrogenase /sirohydrochlorin ferrochelatase; it reads MDYLPIFVEL…GQIQQAEKQL (203 aa). NAD(+) is bound by residues 22–23 and 43–44; these read EV and PE. Phosphoserine is present on serine 128. Residues 214 to 470 are uroporphyrinogen-III C-methyltransferase; that stretch reads GELALVGAGP…ISRPAVVDFA (257 aa). Proline 223 is a binding site for S-adenosyl-L-methionine. The active-site Proton acceptor is aspartate 246. The active-site Proton donor is the lysine 268. S-adenosyl-L-methionine-binding positions include 299–301, isoleucine 304, 329–330, methionine 381, and glycine 410; these read GGD and TA.

In the N-terminal section; belongs to the precorrin-2 dehydrogenase / sirohydrochlorin ferrochelatase family. The protein in the C-terminal section; belongs to the precorrin methyltransferase family.

It catalyses the reaction uroporphyrinogen III + 2 S-adenosyl-L-methionine = precorrin-2 + 2 S-adenosyl-L-homocysteine + H(+). The catalysed reaction is precorrin-2 + NAD(+) = sirohydrochlorin + NADH + 2 H(+). The enzyme catalyses siroheme + 2 H(+) = sirohydrochlorin + Fe(2+). Its pathway is cofactor biosynthesis; adenosylcobalamin biosynthesis; precorrin-2 from uroporphyrinogen III: step 1/1. It participates in cofactor biosynthesis; adenosylcobalamin biosynthesis; sirohydrochlorin from precorrin-2: step 1/1. It functions in the pathway porphyrin-containing compound metabolism; siroheme biosynthesis; precorrin-2 from uroporphyrinogen III: step 1/1. The protein operates within porphyrin-containing compound metabolism; siroheme biosynthesis; siroheme from sirohydrochlorin: step 1/1. Its pathway is porphyrin-containing compound metabolism; siroheme biosynthesis; sirohydrochlorin from precorrin-2: step 1/1. Its function is as follows. Multifunctional enzyme that catalyzes the SAM-dependent methylations of uroporphyrinogen III at position C-2 and C-7 to form precorrin-2 via precorrin-1. Then it catalyzes the NAD-dependent ring dehydrogenation of precorrin-2 to yield sirohydrochlorin. Finally, it catalyzes the ferrochelation of sirohydrochlorin to yield siroheme. The polypeptide is Siroheme synthase (Photorhabdus laumondii subsp. laumondii (strain DSM 15139 / CIP 105565 / TT01) (Photorhabdus luminescens subsp. laumondii)).